The chain runs to 243 residues: MTNSSPRPSGRRADQLRDVRITRHYTKHAEGSVLVEFGETKVICTASVVERVPEFLRERGQGWLTAEYGMLPRATHTRSDREAARGKQTGRTQEIQRLIGRALRAVFDLNALGPRTLHLDCDVIQADGGTRTASITGAFVAAHDAVTKLVAAGKIARSPITDYVAAISVGVFGGAPVLDLDYDEDSACDTDMNVVMTGAGGFVEVQGTAEGVPFSRAEMNALLDLAQAGIGELVRLQRAALEA.

Phosphate-binding positions include Arg-91 and 129–131 (GTR).

It belongs to the RNase PH family. As to quaternary structure, homohexameric ring arranged as a trimer of dimers.

The enzyme catalyses tRNA(n+1) + phosphate = tRNA(n) + a ribonucleoside 5'-diphosphate. In terms of biological role, phosphorolytic 3'-5' exoribonuclease that plays an important role in tRNA 3'-end maturation. Removes nucleotide residues following the 3'-CCA terminus of tRNAs; can also add nucleotides to the ends of RNA molecules by using nucleoside diphosphates as substrates, but this may not be physiologically important. Probably plays a role in initiation of 16S rRNA degradation (leading to ribosome degradation) during starvation. The sequence is that of Ribonuclease PH from Burkholderia thailandensis (strain ATCC 700388 / DSM 13276 / CCUG 48851 / CIP 106301 / E264).